A 254-amino-acid chain; its full sequence is 3-dehydroquinate dehydratase (254 aa).

3-dehydroquinate contacts are provided by residues 47–49 (EFR) and R83. H144 functions as the Proton donor/acceptor in the catalytic mechanism. K171 acts as the Schiff-base intermediate with substrate in catalysis. Residues R213, S232, and Q236 each coordinate 3-dehydroquinate.

Belongs to the type-I 3-dehydroquinase family. Homodimer.

It carries out the reaction 3-dehydroquinate = 3-dehydroshikimate + H2O. It participates in metabolic intermediate biosynthesis; chorismate biosynthesis; chorismate from D-erythrose 4-phosphate and phosphoenolpyruvate: step 3/7. Its function is as follows. Involved in the third step of the chorismate pathway, which leads to the biosynthesis of aromatic amino acids. Catalyzes the cis-dehydration of 3-dehydroquinate (DHQ) and introduces the first double bond of the aromatic ring to yield 3-dehydroshikimate. This chain is 3-dehydroquinate dehydratase, found in Neisseria meningitidis serogroup C / serotype 2a (strain ATCC 700532 / DSM 15464 / FAM18).